Consider the following 468-residue polypeptide: Probable soluble pyridine nucleotide transhydrogenase (468 aa).

An FAD-binding site is contributed by 33–42; the sequence is ERGRMLGGVC.

This sequence belongs to the class-I pyridine nucleotide-disulfide oxidoreductase family. The cofactor is FAD.

It localises to the cytoplasm. The enzyme catalyses NAD(+) + NADPH = NADH + NADP(+). Conversion of NADPH, generated by peripheral catabolic pathways, to NADH, which can enter the respiratory chain for energy generation. This chain is Probable soluble pyridine nucleotide transhydrogenase (sthA), found in Mycobacterium bovis (strain ATCC BAA-935 / AF2122/97).